Consider the following 573-residue polypeptide: Diflavin flavoprotein A 1 (573 aa).

Residues 43-236 (QNGTTYNSYL…GTISTVANGH (194 aa)) are zinc metallo-hydrolase. Histidine 92, glutamate 94, aspartate 96, histidine 159, aspartate 178, and histidine 236 together coordinate Fe cation. Positions 265–401 (VVVFYVADYG…LCDESGTDLG (137 aa)) constitute a Flavodoxin-like domain. Positions 424–573 (IGRISGGLYI…VHHRKVGNYY (150 aa)) are flavodoxin-reductase-like.

The protein in the N-terminal section; belongs to the zinc metallo-hydrolase group 3 family. This sequence in the C-terminal section; belongs to the flavodoxin reductase family. In terms of assembly, homodimer. Requires Fe cation as cofactor. The cofactor is FAD. FMN serves as cofactor.

Functionally, mediates electron transfer from NADH to oxygen, reducing it to water. This modular protein has 3 redox cofactors, in other organisms the same activity requires 2 or 3 proteins. This Synechocystis sp. (strain ATCC 27184 / PCC 6803 / Kazusa) protein is Diflavin flavoprotein A 1 (dfa1).